Reading from the N-terminus, the 197-residue chain is Peptide deformylase (197 aa).

Residues C106 and H148 each coordinate Fe cation. E149 is an active-site residue. Residue H152 participates in Fe cation binding.

It belongs to the polypeptide deformylase family. It depends on Fe(2+) as a cofactor.

It carries out the reaction N-terminal N-formyl-L-methionyl-[peptide] + H2O = N-terminal L-methionyl-[peptide] + formate. Removes the formyl group from the N-terminal Met of newly synthesized proteins. Requires at least a dipeptide for an efficient rate of reaction. N-terminal L-methionine is a prerequisite for activity but the enzyme has broad specificity at other positions. The sequence is that of Peptide deformylase from Mycolicibacterium smegmatis (strain ATCC 700084 / mc(2)155) (Mycobacterium smegmatis).